A 482-amino-acid chain; its full sequence is UDP-N-acetylmuramoyl-L-alanyl-D-glutamate--2,6-diaminopimelate ligase (482 aa).

Residues leucine 28 and serine 30 each coordinate UDP-N-acetyl-alpha-D-muramoyl-L-alanyl-D-glutamate. An ATP-binding site is contributed by 108–114; sequence GTNGKTT. Residues 150-151, serine 177, glutamine 183, and arginine 185 each bind UDP-N-acetyl-alpha-D-muramoyl-L-alanyl-D-glutamate; that span reads TT. N6-carboxylysine is present on lysine 217. Residues arginine 372, 396-399, glycine 447, and glutamate 451 each bind meso-2,6-diaminopimelate; that span reads DNPR. The Meso-diaminopimelate recognition motif motif lies at 396 to 399; that stretch reads DNPR.

It belongs to the MurCDEF family. MurE subfamily. Requires Mg(2+) as cofactor. Post-translationally, carboxylation is probably crucial for Mg(2+) binding and, consequently, for the gamma-phosphate positioning of ATP.

Its subcellular location is the cytoplasm. It catalyses the reaction UDP-N-acetyl-alpha-D-muramoyl-L-alanyl-D-glutamate + meso-2,6-diaminopimelate + ATP = UDP-N-acetyl-alpha-D-muramoyl-L-alanyl-gamma-D-glutamyl-meso-2,6-diaminopimelate + ADP + phosphate + H(+). It functions in the pathway cell wall biogenesis; peptidoglycan biosynthesis. Catalyzes the addition of meso-diaminopimelic acid to the nucleotide precursor UDP-N-acetylmuramoyl-L-alanyl-D-glutamate (UMAG) in the biosynthesis of bacterial cell-wall peptidoglycan. The polypeptide is UDP-N-acetylmuramoyl-L-alanyl-D-glutamate--2,6-diaminopimelate ligase (Aquifex aeolicus (strain VF5)).